Reading from the N-terminus, the 646-residue chain is Peptidylprolyl isomerase domain and WD repeat-containing protein 1 (646 aa).

Residues 1–30 (MAAESGSDFQQRRRRRRDPEEPEKTELSER) form a disordered region. Position 2 is an N-acetylalanine (A2). Positions 17 to 30 (RDPEEPEKTELSER) are enriched in basic and acidic residues. WD repeat units lie at residues 80 to 118 (ASMYERSYMHRDVITHVVCTKTDFIITASHDGHVKFWKK), 124 to 162 (EFVKHFRSHLGVIESIAVSSEGALFCSVGDDKAMKVFDV), 168 to 208 (INML…IYDG), 213 to 252 (QPLHIFDKLHTSPLTQIRLNPVYKAVVSSDKSGMIEYWTG), 271 to 309 (TDLYEFAKCKAYPTSVCFSPDGKKIATIGSDRKVRIFRF), 345 to 386 (AVER…VETN), and 401 to 453 (MQLA…MFTK). Over residues 455 to 478 (EPEDTKSADSDRDVFNEKPSKEEV) the composition is skewed to basic and acidic residues. The interval 455 to 490 (EPEDTKSADSDRDVFNEKPSKEEVMAATQAEGPKRV) is disordered. Positions 490–645 (VSDSAIIHTS…EDVSIINITV (156 aa)) constitute a PPIase cyclophilin-type domain.

It belongs to the cyclophilin-type PPIase family. PPIL1 subfamily. As to quaternary structure, identified in the spliceosome C complex.

It is found in the nucleus. The enzyme catalyses [protein]-peptidylproline (omega=180) = [protein]-peptidylproline (omega=0). Inhibited by cyclosporin A (CsA). PPIase that catalyzes the cis-trans isomerization of proline imidic peptide bonds in oligopeptides and may therefore assist protein folding. May be involved in pre-mRNA splicing. This is Peptidylprolyl isomerase domain and WD repeat-containing protein 1 from Homo sapiens (Human).